A 97-amino-acid chain; its full sequence is Na(+)/H(+) antiporter subunit F1 (97 aa).

The next 3 helical transmembrane spans lie at 3–23, 35–55, and 60–80; these read HNVI…AMLI, VVAL…FSIL, and YMIV…AVFS.

The protein belongs to the CPA3 antiporters (TC 2.A.63) subunit F family. As to quaternary structure, may form a heterooligomeric complex that consists of seven subunits: mnhA1, mnhB1, mnhC1, mnhD1, mnhE1, mnhF1 and mnhG1.

Its subcellular location is the cell membrane. Mnh complex is a Na(+)/H(+) antiporter involved in Na(+) excretion. This Staphylococcus aureus (strain Mu3 / ATCC 700698) protein is Na(+)/H(+) antiporter subunit F1 (mnhF1).